The primary structure comprises 193 residues: Fe/S biogenesis protein NfuA (193 aa).

Residues Cys-151 and Cys-154 each contribute to the [4Fe-4S] cluster site.

It belongs to the NfuA family. As to quaternary structure, homodimer. [4Fe-4S] cluster serves as cofactor.

Functionally, involved in iron-sulfur cluster biogenesis. Binds a 4Fe-4S cluster, can transfer this cluster to apoproteins, and thereby intervenes in the maturation of Fe/S proteins. Could also act as a scaffold/chaperone for damaged Fe/S proteins. The protein is Fe/S biogenesis protein NfuA of Buchnera aphidicola subsp. Cinara cedri (strain Cc).